A 132-amino-acid polypeptide reads, in one-letter code: Small ribosomal subunit protein uS8c (132 aa).

This sequence belongs to the universal ribosomal protein uS8 family. In terms of assembly, part of the 30S ribosomal subunit.

The protein resides in the plastid. It is found in the chloroplast. Functionally, one of the primary rRNA binding proteins, it binds directly to 16S rRNA central domain where it helps coordinate assembly of the platform of the 30S subunit. The chain is Small ribosomal subunit protein uS8c (rps8) from Spirogyra maxima (Green alga).